The chain runs to 417 residues: UDP-N-acetylglucosamine 1-carboxyvinyltransferase (417 aa).

22 to 23 (KN) is a binding site for phosphoenolpyruvate. A UDP-N-acetyl-alpha-D-glucosamine-binding site is contributed by Arg94. The active-site Proton donor is the Cys118. At Cys118 the chain carries 2-(S-cysteinyl)pyruvic acid O-phosphothioketal. UDP-N-acetyl-alpha-D-glucosamine is bound by residues 123–127 (RPIDQ), Asp306, and Ile328.

It belongs to the EPSP synthase family. MurA subfamily.

Its subcellular location is the cytoplasm. The catalysed reaction is phosphoenolpyruvate + UDP-N-acetyl-alpha-D-glucosamine = UDP-N-acetyl-3-O-(1-carboxyvinyl)-alpha-D-glucosamine + phosphate. The protein operates within cell wall biogenesis; peptidoglycan biosynthesis. Functionally, cell wall formation. Adds enolpyruvyl to UDP-N-acetylglucosamine. In Clostridium botulinum (strain ATCC 19397 / Type A), this protein is UDP-N-acetylglucosamine 1-carboxyvinyltransferase.